Reading from the N-terminus, the 557-residue chain is TGF-beta receptor type-2 (557 aa).

Positions 1-23 (MPPRLRPLLLRVSLWVLVGSSSP) are cleaved as a signal peptide. The Extracellular portion of the chain corresponds to 24–155 (ALLHDRSKEN…KPEEKDEISK (132 aa)). Cystine bridges form between cysteine 41-cysteine 74, cysteine 44-cysteine 61, cysteine 51-cysteine 57, cysteine 67-cysteine 91, cysteine 111-cysteine 126, and cysteine 128-cysteine 133. N-linked (GlcNAc...) asparagine glycans are attached at residues asparagine 62 and asparagine 84. A helical membrane pass occupies residues 156–176 (VTIISLVPLLVISVAVIVIFY). The Cytoplasmic segment spans residues 177 to 557 (AYRTHKKRKL…PEDGSVTTAK (381 aa)). A Protein kinase domain is found at 234-537 (IELDIVVGKG…FSEFKHHDKL (304 aa)). Residues 240–248 (VGKGRFAEV) and lysine 267 each bind ATP. Aspartate 369 acts as the Proton acceptor in catalysis.

Belongs to the protein kinase superfamily. TKL Ser/Thr protein kinase family. TGFB receptor subfamily. Heterohexamer; TGFB1, TGFB2 and TGFB3 homodimeric ligands assemble a functional receptor composed of two TGFBR1 and TGFBR2 heterodimers to form a ligand-receptor heterohexamer. It depends on Mg(2+) as a cofactor. The cofactor is Mn(2+). In terms of processing, phosphorylated on a Ser/Thr residue in the cytoplasmic domain. As to expression, detected at low levels in embryonic heart, brain and lung. Detected at high levels in hatchling heart and lung.

Its subcellular location is the cell membrane. It is found in the membrane raft. It catalyses the reaction L-threonyl-[receptor-protein] + ATP = O-phospho-L-threonyl-[receptor-protein] + ADP + H(+). The enzyme catalyses L-seryl-[receptor-protein] + ATP = O-phospho-L-seryl-[receptor-protein] + ADP + H(+). Functionally, transmembrane serine/threonine kinase forming with the TGF-beta type I serine/threonine kinase receptor, TGFBR1, the non-promiscuous receptor for the TGF-beta cytokines TGFB1, TGFB2 and TGFB3. Transduces the TGFB1, TGFB2 and TGFB3 signal from the cell surface to the cytoplasm and is thus regulating a plethora of physiological and pathological processes including cell cycle arrest in epithelial and hematopoietic cells, control of mesenchymal cell proliferation and differentiation, wound healing, extracellular matrix production, immunosuppression and carcinogenesis. The formation of the receptor complex composed of 2 TGFBR1 and 2 TGFBR2 molecules symmetrically bound to the cytokine dimer results in the phosphorylation and the activation of TGFRB1 by the constitutively active TGFBR2. Activated TGFBR1 phosphorylates SMAD2 which dissociates from the receptor and interacts with SMAD4. The SMAD2-SMAD4 complex is subsequently translocated to the nucleus where it modulates the transcription of the TGF-beta-regulated genes. This constitutes the canonical SMAD-dependent TGF-beta signaling cascade. Also involved in non-canonical, SMAD-independent TGF-beta signaling pathways. In Gallus gallus (Chicken), this protein is TGF-beta receptor type-2 (TGFBR2).